A 213-amino-acid chain; its full sequence is Protein nullo (213 aa).

Blastoderm. Throughout the entire cortex of the embryo although the distribution is not uniform.

Functionally, actin-myosin network stability during cellularization. Might be involved in increasing actin-actin interactions or membrane-to-cytoskeleton attachments. nullo together with Sry-a and bnk may provide auxiliary functions, by acting both to stabilize a large and dynamic microfilament structure and regulate its functions. The chain is Protein nullo (nullo) from Drosophila melanogaster (Fruit fly).